A 95-amino-acid chain; its full sequence is Protein TusB (95 aa).

Belongs to the DsrH/TusB family. In terms of assembly, heterohexamer, formed by a dimer of trimers. The hexameric TusBCD complex contains 2 copies each of TusB, TusC and TusD. The TusBCD complex interacts with TusE.

It localises to the cytoplasm. In terms of biological role, part of a sulfur-relay system required for 2-thiolation of 5-methylaminomethyl-2-thiouridine (mnm(5)s(2)U) at tRNA wobble positions. This is Protein TusB from Pectobacterium parmentieri.